A 485-amino-acid chain; its full sequence is Glutamyl-tRNA(Gln) amidotransferase subunit A (485 aa).

Active-site charge relay system residues include K74 and S149. The active-site Acyl-ester intermediate is the S173.

This sequence belongs to the amidase family. GatA subfamily. In terms of assembly, heterotrimer of A, B and C subunits.

It catalyses the reaction L-glutamyl-tRNA(Gln) + L-glutamine + ATP + H2O = L-glutaminyl-tRNA(Gln) + L-glutamate + ADP + phosphate + H(+). Functionally, allows the formation of correctly charged Gln-tRNA(Gln) through the transamidation of misacylated Glu-tRNA(Gln) in organisms which lack glutaminyl-tRNA synthetase. The reaction takes place in the presence of glutamine and ATP through an activated gamma-phospho-Glu-tRNA(Gln). The protein is Glutamyl-tRNA(Gln) amidotransferase subunit A of Janthinobacterium sp. (strain Marseille) (Minibacterium massiliensis).